The chain runs to 317 residues: Adenine deaminase (317 aa).

Zn(2+) contacts are provided by histidine 14, histidine 16, and histidine 194. Glutamate 197 functions as the Proton donor in the catalytic mechanism. Residue aspartate 275 coordinates Zn(2+). Aspartate 276 contributes to the substrate binding site.

Belongs to the metallo-dependent hydrolases superfamily. Adenosine and AMP deaminases family. Adenine deaminase type 2 subfamily. The cofactor is Zn(2+).

It catalyses the reaction adenine + H2O + H(+) = hypoxanthine + NH4(+). Catalyzes the hydrolytic deamination of adenine to hypoxanthine. Plays an important role in the purine salvage pathway and in nitrogen catabolism. The chain is Adenine deaminase from Pseudomonas syringae pv. syringae (strain B728a).